A 54-amino-acid chain; its full sequence is Ovomucoid (54 aa).

Residues 4–54 (VDCSDYPKPVCSPENMPVCGSDSKTYSNKCDFCNAVADSNGTLTLSHFGKC) enclose the Kazal-like domain. 3 disulfide bridges follow: cysteine 6-cysteine 36, cysteine 14-cysteine 33, and cysteine 22-cysteine 54. Asparagine 43 is a glycosylation site (N-linked (GlcNAc...) asparagine).

Its subcellular location is the secreted. The chain is Ovomucoid from Nycticorax nycticorax (Black-crowned night-heron).